The primary structure comprises 471 residues: MELSSKKKLHALSLAEKIQVLELLDESKMSQSEVARRFQVSQPQISRICKNKEKLLADWCSGTANRERKRKRESKYSGIDEALLCWYHIARAKAWDVTGPMLLHKAKELADIMGQDFVPSIGWLVRWKRRNNVGFGARHVLAPSFPPEPPPPGLTSQAQLPLSLKDFSPEDVFGCAELPLLYRAVPGSFGACDQVQVLLCANSRGTEKRRVLLGGLQAAPRCFFGIRSEALPASYHPDLGIPWLEWLAQFDRDMGQQGRQVALLLAARVVEELAGLPGLYHVKLLPLAASSTTPPLPSSVVRAFKAHYRHRLLGKLAAIQSERDGTSLAEAGAGITVLDALHVASAAWAKVPPQLIFSSFIQEGLAPGKTPPSSHKTSEMPPVPGGLSLEEFSRFVDLEGEEPRSGVCKEEIGTEDEKGDREGAFEPLPTKADALRALGTLRRWFECNSTSPELFEKFYDCEEEVERLCCL.

The HTH psq-type domain occupies 3-55; it reads LSSKKKLHALSLAEKIQVLELLDESKMSQSEVARRFQVSQPQISRICKNKEKL. 2 consecutive DNA-binding regions (H-T-H motif) follow at residues 31-51 and 100-130; these read QSEVARRFQVSQPQISRICKN and PMLLHKAKELADIMGQDFVPSIGWLVRWKRR. The 71-residue stretch at 67 to 137 folds into the HTH CENPB-type domain; the sequence is ERKRKRESKY…KRRNNVGFGA (71 aa). Residues 167-360 form the DDE-1 domain; the sequence is FSPEDVFGCA…VPPQLIFSSF (194 aa).

Belongs to the tigger transposable element derived protein family.

The protein resides in the nucleus. This chain is Tigger transposable element-derived protein 3 (TIGD3), found in Homo sapiens (Human).